We begin with the raw amino-acid sequence, 335 residues long: Nucleoid-associated protein YejK (335 aa).

It belongs to the YejK family.

The protein localises to the cytoplasm. The protein resides in the nucleoid. In Escherichia coli (strain K12 / MC4100 / BW2952), this protein is Nucleoid-associated protein YejK.